The sequence spans 158 residues: RNA pyrophosphohydrolase (158 aa).

The region spanning 9 to 151 (PLRNGVGIVV…KLHVYKDVKE (143 aa)) is the Nudix hydrolase domain. The Nudix box signature appears at 43–64 (GGVDKGEDYLTAAYRELEEETS).

This sequence belongs to the Nudix hydrolase family. RppH subfamily. A divalent metal cation is required as a cofactor.

Accelerates the degradation of transcripts by removing pyrophosphate from the 5'-end of triphosphorylated RNA, leading to a more labile monophosphorylated state that can stimulate subsequent ribonuclease cleavage. The protein is RNA pyrophosphohydrolase of Pelagibacter ubique (strain HTCC1062).